The sequence spans 114 residues: Type 4 adapter protein IcmS (114 aa).

The T4BSS is a complex nanomachine composed of several subcomplexes. This subunit is part of the Type IV Coupling Complex (T4CC), a subcomplex composed of the DotLMNYZ core and the IcmSW-LvgA adapter subunits, linked by the C-terminal tail of DotL. Interacts with IcmW. IcmS and IcmW form a stable complex. Interacts directly with the type 4 coupling protein DotL. Interacts with LvgA. Interacts with effector proteins.

It localises to the cytoplasm. Interaction with DotL is critical for the export of IcmSW-dependent substrates. Component of the Dot/Icm type IVB secretion system (T4BSS), which is used to inject bacterial effector proteins into eukaryotic host cells. Part of a subcomplex which recruits effector proteins and delivers them to the core transmembrane subcomplex. The IcmS/IcmW protein complex plays an important role in protein translocation by interacting with multiple Dot/Icm effector proteins to facilitate their translocation into host cells. Interaction promotes conformational changes in the effector protein, which may facilitate display of a C-terminal translocation signal. May maintain the substrates in a translocation competent form. Required for intracellular growth in host cells, replicative phagosome formation and phagosome trafficking. IcmS is required for IcmW stability. The protein is Type 4 adapter protein IcmS of Legionella pneumophila subsp. pneumophila (strain Philadelphia 1 / ATCC 33152 / DSM 7513).